The following is a 333-amino-acid chain: MIDLRSDTVTRPSRAMLEAMMAAPVGDDVYGDDPTVNALQDYAAELSGKEAAIFLPTGTQANLVALLSHCERGEEYIVGQAAHNYLFEAGGAAVLGSIQPQPIDAAADGTLPLDKVAMKIKPDDIHFARTKLLSLENTHNGKVLPREYLKDAWEFTRERNLALHVDGARIFNAVVAYGSELKELTQYCDSFTICLSKGLGTPVGSLLVGNRDYIKRAIRWRKMTGGGMRQSGILAAAGMYALKNNVARLQEDHDNAAWMAEQLREAGADVMRQDTNMLFVRVGEENAAALGEYMKARNVLINASPIVRLVTHLDVSREQLAEVAAHWRAFLAR.

An N6-(pyridoxal phosphate)lysine modification is found at K197.

The protein belongs to the threonine aldolase family. Homotetramer. Pyridoxal 5'-phosphate serves as cofactor.

It carries out the reaction L-threonine = acetaldehyde + glycine. The enzyme catalyses L-allo-threonine = acetaldehyde + glycine. Catalyzes the cleavage of L-allo-threonine and L-threonine to glycine and acetaldehyde. L-threo-phenylserine and L-erythro-phenylserine are also good substrates. The protein is Low specificity L-threonine aldolase (ltaE) of Escherichia coli O157:H7.